The sequence spans 553 residues: Major facilitator-type transporter hxnZ (553 aa).

5 helical membrane-spanning segments follow: residues 89 to 109, 128 to 148, 152 to 172, 174 to 194, and 213 to 233; these read FTVA…ISAV, VAYY…SDLI, PAFN…AGTS, FIAF…NVVC, and ALSG…WVFL. The N-linked (GlcNAc...) asparagine glycan is linked to Asn-235. 7 helical membrane-spanning segments follow: residues 257-277, 366-386, 409-429, 433-453, 459-481, 496-516, and 525-545; these read YTLI…IFVF, ALIW…FNFL, IQSA…NTFL, WMMG…VGVK, LAFS…YAIM, TASG…SLIA, and PIYA…GLPF.

It belongs to the major facilitator superfamily.

The protein localises to the cell membrane. Functionally, major facilitator-type transporter, part of the hnx cluster involved in the purine degradation. The nicotinate hydroxylase hnxS accepts nicotinate as a substrate and catalyzes the first step of nicotinate catabolism. The major facilitator-type transporters hxnP and hxnZ are probably involved in the uptake of nicotinate-derived metabolites, and the oxidoreductases hxnT and hxnY in the further metabolism of 6-OH nicotinic acid. The chain is Major facilitator-type transporter hxnZ from Emericella nidulans (strain FGSC A4 / ATCC 38163 / CBS 112.46 / NRRL 194 / M139) (Aspergillus nidulans).